Consider the following 245-residue polypeptide: Ninjurin-A (245 aa).

Over 1–170 (MSNLEHITLE…TSSQHPYFYP (170 aa)) the chain is Extracellular. 2 N-linked (GlcNAc...) asparagine glycosylation sites follow: N19 and N28. The interval 32–101 (HSYGGAIDGR…NVNVNVPNGG (70 aa)) is disordered. A compositionally biased stretch (low complexity) spans 92 to 101 (NVNVNVPNGG). Residues 135–146 (KKTLAQGMMDLA) are helix alpha1. The helix alpha2 stretch occupies residues 149-165 (SANANQLRYVLETSSQH). A helical membrane pass occupies residues 171 to 191 (SLLFISLSIIFQIAVGVGLIL). The Cytoplasmic portion of the chain corresponds to 192-211 (NGQYNIKNGHDICRANRINN). Residues 212–232 (YTVSGIFIVTVVNVLISAFTV) form a helical membrane-spanning segment. The Extracellular segment spans residues 233–245 (DRDTVPALPANTT).

Belongs to the ninjurin family. As to quaternary structure, homooligomer. Post-translationally, cleaved by Mmp1 protease to generate the Secreted ninjurin-A form.

It is found in the cell membrane. It localises to the secreted. Effector of non-apoptotic necrotic cell death that mediates plasma membrane rupture (cytolysis): oligomerizes in response to death stimuli and promotes plasma membrane rupture by introducing hydrophilic faces of 2 alpha helices into the hydrophobic membrane, leading to release intracellular molecules that propagate the inflammatory response. Also acts as a homophilic transmembrane adhesion molecule that promotes cell adhesion by mediating homophilic interactions via its extracellular region. Functionally, secreted form generated by cleavage, which acts as a negative regulator of cell adhesion. Promotes the loss of cell adhesion in a cell non-autonomous manner. The chain is Ninjurin-A from Drosophila melanogaster (Fruit fly).